The following is a 106-amino-acid chain: Small ribosomal subunit protein bS18 (106 aa).

Basic and acidic residues predominate over residues 1 to 22 (MSEETTVRPERTERSERPERPQ). Residues 1-34 (MSEETTVRPERTERSERPERPQYRGNGPRKRRPF) form a disordered region.

This sequence belongs to the bacterial ribosomal protein bS18 family. As to quaternary structure, part of the 30S ribosomal subunit. Forms a tight heterodimer with protein bS6.

Its function is as follows. Binds as a heterodimer with protein bS6 to the central domain of the 16S rRNA, where it helps stabilize the platform of the 30S subunit. The chain is Small ribosomal subunit protein bS18 from Geobacter metallireducens (strain ATCC 53774 / DSM 7210 / GS-15).